We begin with the raw amino-acid sequence, 202 residues long: UPF0301 protein mlr7511 (202 aa).

Belongs to the UPF0301 (AlgH) family.

The sequence is that of UPF0301 protein mlr7511 from Mesorhizobium japonicum (strain LMG 29417 / CECT 9101 / MAFF 303099) (Mesorhizobium loti (strain MAFF 303099)).